Consider the following 120-residue polypeptide: Glycine cleavage system H protein (120 aa).

Residues Ile17–Lys99 form the Lipoyl-binding domain. At Lys58 the chain carries N6-lipoyllysine.

Belongs to the GcvH family. As to quaternary structure, the glycine cleavage system is composed of four proteins: P, T, L and H. Requires (R)-lipoate as cofactor.

Functionally, the glycine cleavage system catalyzes the degradation of glycine. The H protein shuttles the methylamine group of glycine from the P protein to the T protein. This chain is Glycine cleavage system H protein, found in Allorhizobium ampelinum (strain ATCC BAA-846 / DSM 112012 / S4) (Agrobacterium vitis (strain S4)).